We begin with the raw amino-acid sequence, 281 residues long: INSIG family protein (281 aa).

At 1-93 (MSRKEIYEPR…FIDYSSLITF (93 aa)) the chain is on the cytoplasmic side. The residue at position 28 (serine 28) is a Phosphoserine. The helical transmembrane segment at 94–120 (FCKLCVIFGLGFVFTYLAEQIVQDAKL) threads the bilayer. At 121–134 (PLLTVNLKSWKFEP) the chain is on the lumenal side. A helical transmembrane segment spans residues 135-159 (PWPAIFGFVAVILGLSYRRMDTKYP). Over 160 to 170 (LGAAPLRPSQS) the chain is Cytoplasmic. The chain crosses the membrane as a helical span at residues 171-186 (SKWQWISRYLAAFATL). The Lumenal segment spans residues 187-189 (LLS). A helical transmembrane segment spans residues 190-215 (MKKLLFISNSHSIVALVASSASIWYI). The Cytoplasmic segment spans residues 216 to 221 (FDRSRN). The helical transmembrane segment at 222-256 (GIILSTITSVLGSILYYNLVDTSKIELNGVEFPEI) threads the bilayer. The Lumenal segment spans residues 257-260 (QFRL). A helical transmembrane segment spans residues 261 to 281 (WIPMILFSASTIVGNAGRLLF).

This sequence belongs to the INSIG family.

It localises to the endoplasmic reticulum membrane. In Schizosaccharomyces pombe (strain 972 / ATCC 24843) (Fission yeast), this protein is INSIG family protein (ins1).